The following is a 72-amino-acid chain: MIIPVRCFSCGRVIASDYGRYIKRVNEIKAEGRDPSPEEIEKIFDDLGIERYCCRRMIVSHVDLISEIMPFS.

4 residues coordinate Zn(2+): Cys-7, Cys-10, Cys-53, and Cys-54.

The protein belongs to the archaeal Rpo10/eukaryotic RPB10 RNA polymerase subunit family. As to quaternary structure, part of the RNA polymerase complex. Zn(2+) is required as a cofactor.

The protein resides in the cytoplasm. It catalyses the reaction RNA(n) + a ribonucleoside 5'-triphosphate = RNA(n+1) + diphosphate. DNA-dependent RNA polymerase (RNAP) catalyzes the transcription of DNA into RNA using the four ribonucleoside triphosphates as substrates. This is DNA-directed RNA polymerase subunit Rpo10 from Thermoplasma acidophilum (strain ATCC 25905 / DSM 1728 / JCM 9062 / NBRC 15155 / AMRC-C165).